Consider the following 481-residue polypeptide: MKVLVVFIFCLVRSTFGQFEVPDALVEVFRPRGLRVSIPDQEGIKLFAFHGKINEEMNGREGGTFSRDILKAKNGRWTFYDANARLKEGDILYYWTYVDYFDGKNKLGYPNDDQKFVVKQLLDKDGAAPSVTPPTVTKAPPQEHTTLESGCKASVTTKVNERVCAGEQIFHEDFTTFETNIWRPEVKFADKPDYEFVFYRAGPPNLQVKHHRLTIRPVPSDAVFGEGFVSRREKVNLAPACTGVHGSIECVQTPGAFLILPPVTSAQISTKGKWSFKYGKVEIRAKLPKGDWIYPELYLNPVNEEYGPGYASGQIRIAFSGGNEDLCRDLRGGCILGSRPAARNYAVKNIVKNSGSWSDDFHKFIVIWKPDQITMMVDDQVYGNIYPPEGGFVSEAYNLDLVNVERWRGGTSFAPFDKEMYLVLGVGVGGHCFEDRSDATKPWTNNDPKSQKKFYQAAAQWGATWSNASRLEVDYVKVSAL.

An N-terminal signal peptide occupies residues 1-17; sequence MKVLVVFIFCLVRSTFG. Residues 19–123 form the CBM39 domain; it reads FEVPDALVEV…QKFVVKQLLD (105 aa). In terms of domain architecture, GH16 spans 211–481; sequence HRLTIRPVPS…EVDYVKVSAL (271 aa). Residue asparagine 467 is glycosylated (N-linked (GlcNAc...) asparagine).

Belongs to the insect beta-1,3-glucan binding protein family. Post-translationally, the N-terminus is blocked. As to expression, hemolymph.

The protein localises to the secreted. Involved in the recognition of invading microorganisms. Binds specifically to beta-1,3-glucan and activates the phenoloxidase cascade. The protein is Beta-1,3-glucan-binding protein (GRP) of Tenebrio molitor (Yellow mealworm beetle).